Consider the following 270-residue polypeptide: Urease accessory protein UreD (270 aa).

It belongs to the UreD family. As to quaternary structure, ureD, UreF and UreG form a complex that acts as a GTP-hydrolysis-dependent molecular chaperone, activating the urease apoprotein by helping to assemble the nickel containing metallocenter of UreC. The UreE protein probably delivers the nickel.

It localises to the cytoplasm. In terms of biological role, required for maturation of urease via the functional incorporation of the urease nickel metallocenter. The protein is Urease accessory protein UreD of Microcystis aeruginosa (strain NIES-843 / IAM M-2473).